The primary structure comprises 181 residues: D-lyxose/D-mannose isomerase (181 aa).

Residues histidine 75, histidine 77, glutamate 88, and histidine 143 each coordinate Mn(2+).

This sequence belongs to the D-lyxose ketol-isomerase family. Homodimer. The cofactor is Mn(2+).

The catalysed reaction is D-lyxose = D-xylulose. It catalyses the reaction D-mannose = D-fructose. Its function is as follows. Sugar isomerase that catalyzes the reversible isomerization of D-lyxose to D-xylulose, and D-mannose to D-fructose. Shows optimum activity using D-lyxose as substrate, but can also effectively catalyze the isomerization between D-fructose and D-mannose. The polypeptide is D-lyxose/D-mannose isomerase (Thermosediminibacter oceani (strain ATCC BAA-1034 / DSM 16646 / JW/IW-1228P)).